Here is a 690-residue protein sequence, read N- to C-terminus: Signal peptide peptidase-like 2C (690 aa).

Residues 1–28 (MACLGSLHPLGSLLLLFLLLLLSPEARG) form the signal peptide. The Lumenal portion of the chain corresponds to 29-192 (EYGLVRVVSK…APLEPVTDYN (164 aa)). One can recognise a PA domain in the interval 87 to 166 (DSSPRQRPLH…AVLRYTDMLD (80 aa)). N106 is a glycosylation site (N-linked (GlcNAc...) asparagine). Residues 193–213 (MAIIFILAVGTVAAGGYWAGL) form a helical membrane-spanning segment. Residues 214–260 (MEANKLQRRQAQRGGGLGGHNQQQTVAAERSQRAWEDDDFEDAPMDF) lie on the Cytoplasmic side of the membrane. The chain crosses the membrane as a helical span at residues 261-283 (TPAMTGAVVTMSCSIMILLYFFY). Position 284 (D284) is a topological domain, lumenal. The helical transmembrane segment at 285 to 307 (CFVYVMIGIFSLGASTGLYSCLA) threads the bilayer. Topologically, residues 308–328 (PILCHLPLWRYQWVLPGQRVS) are cytoplasmic. Residues 329 to 349 (VTWPLLLLAGLCAMVTVLWVI) traverse the membrane as a helical segment. The Lumenal segment spans residues 350–354 (HRNED). Residues 355–373 (HWAWLLQDTLGVAYCLFVL) form a helical membrane-spanning segment. Residues 374-384 (RRVRLPTFKNC) lie on the Cytoplasmic side of the membrane. The chain crosses the membrane as a helical span at residues 385–405 (TLFLLALLAFDVFFVFITPLF). Residue D395 is part of the active site. Over 406–448 (TKTGESIMVEVASGPADSSSHERLPMVLKVPRLSFSALTLCNQ) the chain is Lumenal. The chain crosses the membrane as a helical span at residues 449–469 (PFSILGFGDIVVPGFLVAYCH). D457 is a catalytic residue. The Cytoplasmic segment spans residues 470-482 (RFDMQVQSRQVYY). Residues 483 to 503 (MACTVAYAVGLLVTFVAMILM) traverse the membrane as a helical segment. A topological domain (lumenal) is located at residue Q504. A helical membrane pass occupies residues 505-525 (MGQPALLYLVSSTLLTSLAVA). The PAL signature appears at 508–510 (PAL). Residues 526 to 690 (TCRQEFTLFW…KKSMSAQAPL (165 aa)) are Cytoplasmic-facing. Residues 564–573 (EDAKDSRTTN) show a composition bias toward basic and acidic residues. The tract at residues 564-633 (EDAKDSRTTN…DPNELPSGSP (70 aa)) is disordered. Polar residues predominate over residues 615-624 (SEGWSDTNLD).

Belongs to the peptidase A22B family. Interacts (via active sites) with FREY; the interaction stabilizes FREY1 protein and inhibits SPPL2C proteolytic activity. In terms of processing, glycosylated. As to expression, highly expressed in testis where it is primarily localised in spermatids (at protein level).

Its subcellular location is the endoplasmic reticulum membrane. Sperm-specific intramembrane-cleaving aspartic protease (I-CLiP) that cleaves distinct tail-anchored proteins and SNARE proteins. In elongated spermatids, modulates intracellular Ca(2+) homeostasis by controlling PLN abundance through proteolytic cleavage. During spermatogenesis, processes SNARE proteins and impacts vesicular trafficking which supports compartmental reorganization in maturating spermatids and may play a role in formation of the acrosome. In terms of biological role, in round spermatids, acts as a scaffold protein supporting FREY1 in IZUMO1 recruitment at the endoplasmic reticulum membrane and coordination of IZUMO1 complex assembly. Stabilizes FREY1 at the endoplasmic reticulum membrane through interaction. May recruit IZUMO1 interaction partners. Functionally, no difference in cleavage specificity compared to isoform 1. This chain is Signal peptide peptidase-like 2C, found in Mus musculus (Mouse).